The primary structure comprises 485 residues: Adenosylhomocysteinase (485 aa).

Substrate contacts are provided by T64, D139, and E205. 206-208 (TTT) contributes to the NAD(+) binding site. Positions 235 and 239 each coordinate substrate. Residues N240, 269–274 (GYGDVG), E292, N327, 348–350 (IGH), and N397 each bind NAD(+).

This sequence belongs to the adenosylhomocysteinase family. NAD(+) is required as a cofactor.

It carries out the reaction S-adenosyl-L-homocysteine + H2O = L-homocysteine + adenosine. The protein operates within amino-acid biosynthesis; L-homocysteine biosynthesis; L-homocysteine from S-adenosyl-L-homocysteine: step 1/1. Functionally, adenosylhomocysteine is a competitive inhibitor of S-adenosyl-L-methionine-dependent methyl transferase reactions; therefore adenosylhomocysteinase may play a key role in the control of methylations via regulation of the intracellular concentration of adenosylhomocysteine. The protein is Adenosylhomocysteinase (SAHH) of Lupinus luteus (European yellow lupine).